We begin with the raw amino-acid sequence, 962 residues long: Replication protein 1a (962 aa).

An Alphavirus-like MT domain is found at 71 to 270; sequence LQLSKNLCPH…HSWKNIKSFL (200 aa). Residues 79 to 356 form a methyltransferase region; it reads PHSFAGAMRQ…EEICFRCPKD (278 aa). The interval 536–561 is disordered; that stretch reads DVDERPAGTVSGPTIQAPSVTQENTV. Residues 546–561 are compositionally biased toward polar residues; it reads SGPTIQAPSVTQENTV. Residues 667–820 form the (+)RNA virus helicase ATP-binding domain; that stretch reads NKDCVLNNNV…KLSPDSSDQQ (154 aa). The interval 693–941 is ATP-dependent helicase; it reads LMDGVAGCGK…STKCDLFTDK (249 aa). Positions 821 to 962 constitute a (+)RNA virus helicase C-terminal domain; sequence IRTFRCPKDV…SRKFRLLFGC (142 aa).

It belongs to the bromoviridae replication protein 1a family. Interacts with RNA-directed RNA polymerase 2a.

The protein resides in the host endoplasmic reticulum membrane. Functionally, involved in the virus replication. Contains a helicase domain and a methyltransferase domain. The methyltransferase domain is probably involved in viral RNA capping. Involved in the formation of ER membrane spherular invaginations in which RNA replication complexes form. The sequence is that of Replication protein 1a from Solanum lycopersicum (Tomato).